Consider the following 216-residue polypeptide: U1 small nuclear ribonucleoprotein C (216 aa).

The Matrin-type zinc finger occupies 4 to 36 (FFCDYCDVYLTHDSMSVRKAHNAGRNHLRNVVE). Composition is skewed to pro residues over residues 68–80 (AMAPPGAFPPPFG), 87–198 (QLPP…PAPP), and 206–216 (PGPPPGLSEKR). Residues 68–216 (AMAPPGAFPP…GPPPGLSEKR (149 aa)) are disordered.

The protein belongs to the U1 small nuclear ribonucleoprotein C family. U1 snRNP is composed of the 7 core Sm proteins B/B', D1, D2, D3, E, F and G that assemble in a heptameric protein ring on the Sm site of the small nuclear RNA to form the core snRNP, and at least 3 U1 snRNP-specific proteins U1-70K, U1-A and U1-C. U1-C interacts with U1 snRNA and the 5' splice-site region of the pre-mRNA.

It is found in the nucleus. Its function is as follows. Component of the spliceosomal U1 snRNP, which is essential for recognition of the pre-mRNA 5' splice-site and the subsequent assembly of the spliceosome. U1-C is directly involved in initial 5' splice-site recognition for both constitutive and regulated alternative splicing. The interaction with the 5' splice-site seems to precede base-pairing between the pre-mRNA and the U1 snRNA. Stimulates commitment or early (E) complex formation by stabilizing the base pairing of the 5' end of the U1 snRNA and the 5' splice-site region. This is U1 small nuclear ribonucleoprotein C from Aspergillus fumigatus (strain ATCC MYA-4609 / CBS 101355 / FGSC A1100 / Af293) (Neosartorya fumigata).